A 180-amino-acid polypeptide reads, in one-letter code: Shikimate kinase (180 aa).

Position 14–19 (14–19 (GAGKTC)) interacts with ATP. Thr18 serves as a coordination point for Mg(2+). Residues Asp36, Arg60, and Gly82 each coordinate substrate. Arg120 contacts ATP. Position 139 (Arg139) interacts with substrate.

This sequence belongs to the shikimate kinase family. Monomer. Requires Mg(2+) as cofactor.

The protein localises to the cytoplasm. The enzyme catalyses shikimate + ATP = 3-phosphoshikimate + ADP + H(+). It functions in the pathway metabolic intermediate biosynthesis; chorismate biosynthesis; chorismate from D-erythrose 4-phosphate and phosphoenolpyruvate: step 5/7. Functionally, catalyzes the specific phosphorylation of the 3-hydroxyl group of shikimic acid using ATP as a cosubstrate. This Stenotrophomonas maltophilia (strain R551-3) protein is Shikimate kinase.